Consider the following 487-residue polypeptide: UDP-glycosyltransferase 72E1 (487 aa).

The active-site Proton acceptor is the histidine 18. Histidine 18 contributes to the an anthocyanidin binding site. Aspartate 116 (charge relay) is an active-site residue. 7 residues coordinate UDP-alpha-D-glucose: alanine 351, glutamine 353, histidine 368, tryptophan 371, asparagine 372, serine 373, and glutamate 376. Alanine 391 contributes to the an anthocyanidin binding site. UDP-alpha-D-glucose-binding residues include glutamate 392 and glutamine 393.

This sequence belongs to the UDP-glycosyltransferase family. Interacts with SIS8. Expressed in seedlings, roots and leaves.

It localises to the nucleus. It carries out the reaction (E)-coniferaldehyde + UDP-alpha-D-glucose = 4-O-(beta-D-glucosyl)-4-(E)-coniferyl aldehyde + UDP + H(+). It catalyses the reaction (E)-sinapaldehyde + UDP-alpha-D-glucose = 4-O-(beta-D-glucosyl)-4-trans-sinapoyl aldehyde + UDP + H(+). Its function is as follows. UDP-glycosyltransferase that glucosylates coniferyl aldehyde to form coniferyl aldehyde 4-O-glucoside. Glucosylates sinapyl aldehyde to form sinapyl aldehyde 4-O-glucoside. Is not active in presence of coniferyl alcohol or sinapyl alcohol. Can glucosylate the phytotoxic xenobiotic compound 2,4,5-trichlorophenol (TCP). The polypeptide is UDP-glycosyltransferase 72E1 (Arabidopsis thaliana (Mouse-ear cress)).